The chain runs to 265 residues: Ribosomal RNA small subunit methyltransferase G (265 aa).

Positions 75, 80, and 145 each coordinate S-adenosyl-L-methionine. The segment at 212-265 is disordered; the sequence is RAVRSSQRTRAESRGGRGDGERHDGRQVRRTSRDSLRSREVGRDQPTRGQSRST. Over residues 220 to 257 the composition is skewed to basic and acidic residues; that stretch reads TRAESRGGRGDGERHDGRQVRRTSRDSLRSREVGRDQP.

Belongs to the methyltransferase superfamily. RNA methyltransferase RsmG family.

It is found in the cytoplasm. Its function is as follows. Specifically methylates the N7 position of guanine in position 518 of 16S rRNA. This Frankia casuarinae (strain DSM 45818 / CECT 9043 / HFP020203 / CcI3) protein is Ribosomal RNA small subunit methyltransferase G.